The following is a 658-amino-acid chain: Outer dynein arm-docking complex subunit 1 (658 aa).

Coiled coils occupy residues Lys-11–Asn-156, Arg-186–Glu-234, and Asn-303–Gln-380. 2 disordered regions span residues Asp-496 to His-552 and Gly-574 to Asn-658. Residues Ser-500, Ser-506, Ser-507, and Ser-509 each carry the phosphoserine modification. 4 stretches are compositionally biased toward low complexity: residues Ser-506–Leu-519, Gly-574–Gln-583, Thr-592–Leu-604, and Ser-621–Ser-639.

The protein belongs to the ODA1/DCC2 family. Component of the outer dynein arm-docking complex along with ODAD2, ODAD3, ODAD4 and CLXN. Interacts with ODAD3. Interacts with ODAD4; this interaction may facilitate the recruitment and/or attachment of outer dynein arm docking complex proteins including ODAD1, ODAD3, and ODAD4 to ciliary axonemes. Interacts with DNAH9. Interacts with MNS1. Interacts with PIERCE1 and PIERCE2; the interactions link the outer dynein arms docking complex (ODA-DC) to the internal microtubule inner proteins (MIP) in cilium axoneme. In terms of tissue distribution, expressed in motile ciliated tissues.

It localises to the cytoplasm. The protein resides in the cytoskeleton. Its subcellular location is the cilium axoneme. Functionally, component of the outer dynein arm-docking complex that mediates outer dynein arms (ODA) binding onto the doublet microtubule. Involved in mediating assembly of both ODAs and their axonemal docking complex onto ciliary microtubules. The protein is Outer dynein arm-docking complex subunit 1 (Odad1) of Mus musculus (Mouse).